We begin with the raw amino-acid sequence, 383 residues long: Chitinase-3-like protein 1 (383 aa).

Positions M1 to A21 are cleaved as a signal peptide. Residues Y22–A383 form the GH18 domain. C26 and C51 are oxidised to a cystine. N60 is a glycosylation site (N-linked (GlcNAc...) asparagine). Residues E70–W71, G97–N100, Y141, L204–D207, and R263 each bind chitin. C300 and C364 are joined by a disulfide. Residues Q324–A338 form an important for AKT1 activation and IL8 production region. Chitin is bound at residue W352.

It belongs to the glycosyl hydrolase 18 family. In terms of assembly, monomer. In terms of tissue distribution, detected in smooth muscle cells in atherosclerotic plaques. Detected in regions of vascular occlusion in the aorta.

Its subcellular location is the secreted. It localises to the extracellular space. The protein resides in the cytoplasm. It is found in the perinuclear region. The protein localises to the endoplasmic reticulum. Its function is as follows. Carbohydrate-binding lectin with a preference for chitin. Has no chitinase activity. May play a role in tissue remodeling and in the capacity of cells to respond to and cope with changes in their environment. Plays a role in T-helper cell type 2 (Th2) inflammatory response and IL-13-induced inflammation, regulating allergen sensitization, inflammatory cell apoptosis, dendritic cell accumulation and M2 macrophage differentiation. Facilitates invasion of pathogenic enteric bacteria into colonic mucosa and lymphoid organs. Mediates activation of AKT1 signaling pathway and subsequent IL8 production in colonic epithelial cells. Regulates antibacterial responses in lung by contributing to macrophage bacterial killing, controlling bacterial dissemination and augmenting host tolerance. Also regulates hyperoxia-induced injury, inflammation and epithelial apoptosis in lung. Stimulates migration and adhesion of cultured vascular smooth muscle cells. The sequence is that of Chitinase-3-like protein 1 (CHI3L1) from Sus scrofa (Pig).